Here is a 442-residue protein sequence, read N- to C-terminus: MAKQGALSALSNGGLSELWARLRFLFLAIIVYRIGAHIPVPGINPDRLAALFRQNEGTILSLFNMFSGGALERMSIFALGIMPYISASIIMQLMTAISPQLEQLKKEGESGRRKISQYTRYGTVVLALVQAIGMSVGLGSQGVAFSNDFGFYFVAVTTFVAGAMFMMWLGEQITERGVGNGISMLIFAGIVAGLPRAIGQSFESARQGDINIFALIGVGLLAVAIIAFVVFIERGQRRIAVHYAKRQQGRKVFAAQTSHLPLKVNMAGVIPAIFASSILLFPASLGSWFGQSEGLGWLQDVAQAIAPGQPLNILLFTAGIVFFCFFYTALMFNPKDVAENLKKSGAFIPGIRPGEQSARYIDGVLTRLTMFGALYMTAVCLLPQFLVVAAHVPFYLGGTSLLIVVVVVMDFMAQVQSHLVSHQYESLMKKANLKGYGSGMLR.

10 helical membrane passes run 24-44 (FLFL…PGIN), 76-96 (IFAL…LMTA), 125-145 (VLAL…GVAF), 149-169 (FGFY…MMWL), 178-198 (VGNG…PRAI), 212-232 (IFAL…VVFI), 269-289 (VIPA…GSWF), 312-332 (NILL…ALMF), 363-383 (GVLT…CLLP), and 385-405 (FLVV…LIVV).

The protein belongs to the SecY/SEC61-alpha family. As to quaternary structure, component of the Sec protein translocase complex. Heterotrimer consisting of SecY, SecE and SecG subunits. The heterotrimers can form oligomers, although 1 heterotrimer is thought to be able to translocate proteins. Interacts with the ribosome. Interacts with SecDF, and other proteins may be involved. Interacts with SecA.

The protein localises to the cell inner membrane. Functionally, the central subunit of the protein translocation channel SecYEG. Consists of two halves formed by TMs 1-5 and 6-10. These two domains form a lateral gate at the front which open onto the bilayer between TMs 2 and 7, and are clamped together by SecE at the back. The channel is closed by both a pore ring composed of hydrophobic SecY resides and a short helix (helix 2A) on the extracellular side of the membrane which forms a plug. The plug probably moves laterally to allow the channel to open. The ring and the pore may move independently. This Pseudomonas aeruginosa (strain ATCC 15692 / DSM 22644 / CIP 104116 / JCM 14847 / LMG 12228 / 1C / PRS 101 / PAO1) protein is Protein translocase subunit SecY.